Reading from the N-terminus, the 189-residue chain is Inosine triphosphate pyrophosphatase (189 aa).

An ITP-binding site is contributed by 8 to 13; the sequence is TGNANK. E39 provides a ligand contact to Mg(2+). Residues K51, 67-68, K84, 143-146, K167, and 172-173 contribute to the ITP site; these read DT, FGWD, and HR.

Belongs to the HAM1 NTPase family. As to quaternary structure, homodimer. It depends on Mg(2+) as a cofactor. Requires Mn(2+) as cofactor.

It localises to the cytoplasm. The protein localises to the nucleus. The enzyme catalyses ITP + H2O = IMP + diphosphate + H(+). The catalysed reaction is dITP + H2O = dIMP + diphosphate + H(+). It catalyses the reaction XTP + H2O = XMP + diphosphate + H(+). In terms of biological role, pyrophosphatase that hydrolyzes non-canonical purine nucleotides such as inosine triphosphate (ITP), deoxyinosine triphosphate (dITP) or xanthosine 5'-triphosphate (XTP) to their respective monophosphate derivatives. The enzyme does not distinguish between the deoxy- and ribose forms. Probably excludes non-canonical purines from RNA and DNA precursor pools, thus preventing their incorporation into RNA and DNA and avoiding chromosomal lesions. This is Inosine triphosphate pyrophosphatase from Cryptococcus neoformans var. neoformans serotype D (strain JEC21 / ATCC MYA-565) (Filobasidiella neoformans).